Consider the following 513-residue polypeptide: Serine/threonine-protein kinase PBL27 (513 aa).

The interval methionine 1–glycine 61 is disordered. Residues cysteine 4 and cysteine 7 are each lipidated (S-palmitoyl cysteine). Composition is skewed to basic and acidic residues over residues alanine 15–alanine 27 and isoleucine 38–alanine 57. The Protein kinase domain occupies phenylalanine 83–leucine 360. ATP contacts are provided by residues leucine 89–valine 97 and lysine 112. Aspartate 210 acts as the Proton acceptor in catalysis. Serine 244 is subject to Phosphoserine; by CERK1. Residues threonine 245 and threonine 250 each carry the phosphothreonine; by CERK1 modification. The segment covering phenylalanine 365–glycine 378 has biased composition (polar residues). Residues phenylalanine 365 to aspartate 513 are disordered. Serine 392 and serine 401 each carry phosphoserine. A compositionally biased stretch (basic and acidic residues) spans asparagine 417–arginine 428. A compositionally biased stretch (gly residues) spans serine 434–arginine 446. A compositionally biased stretch (polar residues) spans glutamine 456–threonine 473. The segment covering arginine 475–alanine 486 has biased composition (basic and acidic residues). Positions glycine 504–aspartate 513 are enriched in polar residues.

This sequence belongs to the protein kinase superfamily. Ser/Thr protein kinase family. In terms of assembly, interacts with CERK1 (preferentially unphosphorylated) at the plasma membrane. Binds to MAPKKK5 at the plasma membrane; disassociation is induced by chitin perception by the CERK1 complex. Also associates with MAPKKK3. Post-translationally, phosphorylated by CERK1 upon elicitation by chitin. Palmitoylation at Cys-4 and Cys-7 are required for plasma membrane location.

It is found in the cell membrane. The enzyme catalyses L-seryl-[protein] + ATP = O-phospho-L-seryl-[protein] + ADP + H(+). It catalyses the reaction L-threonyl-[protein] + ATP = O-phospho-L-threonyl-[protein] + ADP + H(+). In terms of biological role, receptor-like cytoplasmic kinase involved in the transduction of signal between the host cell surface chitin receptor complex CERK1-LYK5 and the intracellular MAPKKK5-dependent mitogen-activated protein kinase (MAPK) cascade that leads to chitin-induced immunity. Phosphorylates and activates MAPKKK5 when phosphorylated by CERK1 after elicitation by chitin. This is Serine/threonine-protein kinase PBL27 from Arabidopsis thaliana (Mouse-ear cress).